The following is a 213-amino-acid chain: Putative 3-methyladenine DNA glycosylase (213 aa).

Positions 165 to 187 are disordered; that stretch reads GTPVPPDQVRNGPRTGVSGDGGV.

Belongs to the DNA glycosylase MPG family.

The protein is Putative 3-methyladenine DNA glycosylase of Streptomyces avermitilis (strain ATCC 31267 / DSM 46492 / JCM 5070 / NBRC 14893 / NCIMB 12804 / NRRL 8165 / MA-4680).